The following is a 113-amino-acid chain: Tachykinin-4 (113 aa).

The first 20 residues, 1 to 20, serve as a signal peptide directing secretion; it reads MLPCLALLLLMELSVCTVAG. Met-67 carries the methionine amide modification. Residues 71–79 constitute a propeptide that is removed on maturation; it reads VGGRPLIQP. Residue Leu-95 is modified to Leucine amide. The propeptide occupies 98–113; sequence RSLFTEGREDEAQGSE.

Belongs to the tachykinin family. As to expression, expressed at low levels in the uterus of both pregnant and non-pregnant women. Isoform 1 is found only in the adrenal gland and fetal liver. Isoform 2 is found in heart, liver, bone marrow, prostate, adrenal gland and testis. Isoform 3 and isoform 4 are expressed predominantly in adrenal gland and placenta.

It localises to the secreted. Tachykinins are active peptides which excite neurons, evoke behavioral responses, are potent vasodilators and secretagogues, and contract (directly or indirectly) many smooth muscles. Endokinin-A induces thermal hyperalgesia and pain-related behavior such as scratching following intrathecal administration in rats. These effects are suppressed by treatment with endokinin-C. Endokinin-A/B reduces arterial blood pressure and increases sperm motility. This is Tachykinin-4 from Homo sapiens (Human).